A 314-amino-acid polypeptide reads, in one-letter code: Serine protease 46 (314 aa).

Residues 44–281 form the Peptidase S1 domain; the sequence is VVNGKVVEVG…FTQWIKRQIG (238 aa). An intrachain disulfide couples Cys69 to Cys85. Residues His84 and Asp130 each act as charge relay system in the active site. Cystine bridges form between Cys164–Cys239, Cys197–Cys219, and Cys229–Cys257. Ser233 acts as the Charge relay system in catalysis. The helical transmembrane segment at 293-313 threads the bilayer; the sequence is FLSPFILTGYILLVSLGSLWL.

Belongs to the peptidase S1 family.

It is found in the membrane. The sequence is that of Serine protease 46 (Prss46) from Rattus norvegicus (Rat).